The following is an 89-amino-acid chain: Neuropeptide S (89 aa).

The N-terminal stretch at 1-23 (MIGSLKFNFILFLLISTMHMFWC) is a signal peptide. Positions 24–67 (HPISSSKVPGKSDYFVILLNSCPTRMDRRVGLDFLKPILEKTLM) are excised as a propeptide.

It is found in the secreted. In terms of biological role, modulates arousal and anxiety. May play an important anorexigenic role. Binds to its receptor NPSR1 with nanomolar affinity to increase intracellular calcium concentrations. In Bos taurus (Bovine), this protein is Neuropeptide S (NPS).